A 458-amino-acid chain; its full sequence is UDP-N-acetylmuramoylalanine--D-glutamate ligase (458 aa).

Position 124–130 (124–130 (GSDGKTT)) interacts with ATP.

The protein belongs to the MurCDEF family.

It is found in the cytoplasm. The enzyme catalyses UDP-N-acetyl-alpha-D-muramoyl-L-alanine + D-glutamate + ATP = UDP-N-acetyl-alpha-D-muramoyl-L-alanyl-D-glutamate + ADP + phosphate + H(+). The protein operates within cell wall biogenesis; peptidoglycan biosynthesis. Its function is as follows. Cell wall formation. Catalyzes the addition of glutamate to the nucleotide precursor UDP-N-acetylmuramoyl-L-alanine (UMA). In Clostridium novyi (strain NT), this protein is UDP-N-acetylmuramoylalanine--D-glutamate ligase.